Reading from the N-terminus, the 546-residue chain is SusD-like protein BACOVA_02651 (546 aa).

Residues 1-21 (MRIFMKSKLLVIATTALLFAA) form the signal peptide. Cys22 carries the N-palmitoyl cysteine lipid modification. Residue Cys22 is the site of S-diacylglycerol cysteine attachment.

The protein belongs to the SusD family.

The protein localises to the cell outer membrane. The protein operates within glucan metabolism; xyloglucan degradation. In terms of biological role, polysaccharide-binding protein present at the surface of the cell. Probably mediates xyloglucan-binding before xyloglucan transport in the periplasm for degradation. This chain is SusD-like protein BACOVA_02651, found in Bacteroides ovatus (strain ATCC 8483 / DSM 1896 / JCM 5824 / BCRC 10623 / CCUG 4943 / NCTC 11153).